A 524-amino-acid polypeptide reads, in one-letter code: Ankyrin repeat-containing protein At5g02620 (524 aa).

8 ANK repeats span residues 16–45 (RDDT…GVEL), 55–84 (SGET…SVLA), 90–119 (NGFD…ELSF), 124–153 (SKTT…DLAA), 158–187 (NGKT…GMVT), 192–222 (KGQT…LINS), 226–255 (KGNT…VSRV), and 260–289 (SGET…QNAR). The next 4 helical transmembrane spans lie at 349–369 (AINS…AAIF), 399–419 (FLIF…VVVV), 441–461 (LMWM…FVVV), and 472–492 (VTAI…YWVI). Phosphoserine is present on Ser-508.

It is found in the membrane. The polypeptide is Ankyrin repeat-containing protein At5g02620 (Arabidopsis thaliana (Mouse-ear cress)).